Reading from the N-terminus, the 224-residue chain is Germin-like protein 8-4 (224 aa).

An N-terminal signal peptide occupies residues 1-23 (MASSSSLYLLAALLALASWQAIA). A disulfide bond links cysteine 33 and cysteine 48. The Cupin type-1 domain maps to 70–213 (STMNKVGSNV…AFQVEKKVID (144 aa)). A glycan (N-linked (GlcNAc...) asparagine) is linked at asparagine 78. Histidine 111, histidine 113, glutamate 118, and histidine 158 together coordinate Mn(2+).

This sequence belongs to the germin family. Oligomer (believed to be a pentamer but probably hexamer).

The protein resides in the secreted. Its subcellular location is the extracellular space. It localises to the apoplast. Functionally, plays a role in broad-spectrum disease resistance. Probably has no oxalate oxidase activity even if the active site is conserved. This chain is Germin-like protein 8-4 (GER1), found in Oryza sativa subsp. japonica (Rice).